The primary structure comprises 498 residues: Probable malate:quinone oxidoreductase 2 (498 aa).

This sequence belongs to the MQO family. The cofactor is FAD.

It catalyses the reaction (S)-malate + a quinone = a quinol + oxaloacetate. The protein operates within carbohydrate metabolism; tricarboxylic acid cycle; oxaloacetate from (S)-malate (quinone route): step 1/1. In Staphylococcus aureus (strain MW2), this protein is Probable malate:quinone oxidoreductase 2.